The sequence spans 373 residues: Alanine racemase (373 aa).

Lys40 serves as the catalytic Proton acceptor; specific for D-alanine. At Lys40 the chain carries N6-(pyridoxal phosphate)lysine. Position 140 (Arg140) interacts with substrate. Residue Tyr268 is the Proton acceptor; specific for L-alanine of the active site. Met315 provides a ligand contact to substrate.

Belongs to the alanine racemase family. It depends on pyridoxal 5'-phosphate as a cofactor.

It catalyses the reaction L-alanine = D-alanine. The protein operates within amino-acid biosynthesis; D-alanine biosynthesis; D-alanine from L-alanine: step 1/1. Its function is as follows. Catalyzes the interconversion of L-alanine and D-alanine. May also act on other amino acids. The protein is Alanine racemase (alr) of Levilactobacillus brevis (strain ATCC 367 / BCRC 12310 / CIP 105137 / JCM 1170 / LMG 11437 / NCIMB 947 / NCTC 947) (Lactobacillus brevis).